A 143-amino-acid chain; its full sequence is Large ribosomal subunit protein uL13c (143 aa).

The protein belongs to the universal ribosomal protein uL13 family. As to quaternary structure, part of the 50S ribosomal subunit.

The protein localises to the plastid. The protein resides in the chloroplast. This Gracilaria tenuistipitata var. liui (Red alga) protein is Large ribosomal subunit protein uL13c.